The following is a 674-amino-acid chain: Probable 3',5'-cyclic-AMP phosphodiesterase pde-4 (674 aa).

The interval 1–82 (MPRRRGSSSS…TSSASSYHPP (82 aa)) is disordered. A compositionally biased stretch (gly residues) spans 15 to 24 (GGSGGGGGFG). Positions 39 to 62 (RTSSPSASSTSRTPPAALPPRTSA) are enriched in low complexity. The span at 66-78 (PGSNHKLTSSASS) shows a compositional bias: polar residues. Residues 328–660 (HVPEYGVNCA…EWYQSRIPEE (333 aa)) form the PDEase domain. The Proton donor role is filled by His-407. A divalent metal cation-binding residues include His-411, His-447, Asp-448, and Asp-565.

This sequence belongs to the cyclic nucleotide phosphodiesterase family. A divalent metal cation is required as a cofactor. Expressed in dorsal D (DD) motor neurons and several other neurons at the L1 stage. Expression in DD neurons decreases gradually beginning in the late L1 stage. Highly expressed in adult ventral D (VD) motor neurons, but diminished in adult DD motor neurons.

The enzyme catalyses 3',5'-cyclic AMP + H2O = AMP + H(+). Functionally, hydrolyzes the second messenger 3',5'-cyclic AMP (cAMP), which is a key regulator of many important physiological processes. Antagonizes dorsal D (DD) motor neuron respecification by reducing levels of cAMP. The chain is Probable 3',5'-cyclic-AMP phosphodiesterase pde-4 (pde-4) from Caenorhabditis elegans.